Here is a 326-residue protein sequence, read N- to C-terminus: Glycerol-3-phosphate dehydrogenase [NAD(P)+] (326 aa).

Trp15, Arg35, and Lys107 together coordinate NADPH. Lys107, Gly135, and Ser137 together coordinate sn-glycerol 3-phosphate. Ala139 lines the NADPH pocket. Positions 190, 243, 253, 254, and 255 each coordinate sn-glycerol 3-phosphate. The active-site Proton acceptor is Lys190. Arg254 lines the NADPH pocket. NADPH-binding residues include Leu273 and Glu275.

The protein belongs to the NAD-dependent glycerol-3-phosphate dehydrogenase family.

Its subcellular location is the cytoplasm. It carries out the reaction sn-glycerol 3-phosphate + NAD(+) = dihydroxyacetone phosphate + NADH + H(+). The catalysed reaction is sn-glycerol 3-phosphate + NADP(+) = dihydroxyacetone phosphate + NADPH + H(+). The protein operates within membrane lipid metabolism; glycerophospholipid metabolism. Functionally, catalyzes the reduction of the glycolytic intermediate dihydroxyacetone phosphate (DHAP) to sn-glycerol 3-phosphate (G3P), the key precursor for phospholipid synthesis. The protein is Glycerol-3-phosphate dehydrogenase [NAD(P)+] of Bradyrhizobium sp. (strain BTAi1 / ATCC BAA-1182).